The sequence spans 494 residues: 3-octaprenyl-4-hydroxybenzoate carboxy-lyase (494 aa).

Residue asparagine 172 participates in Mn(2+) binding. Prenylated FMN is bound by residues 175-177, 189-191, and 194-195; these read IYR, RWL, and RG. Glutamate 238 contributes to the Mn(2+) binding site. Aspartate 294 acts as the Proton donor in catalysis.

Belongs to the UbiD family. Homohexamer. Prenylated FMN serves as cofactor. It depends on Mn(2+) as a cofactor.

It localises to the cell membrane. It carries out the reaction a 4-hydroxy-3-(all-trans-polyprenyl)benzoate + H(+) = a 2-(all-trans-polyprenyl)phenol + CO2. The protein operates within cofactor biosynthesis; ubiquinone biosynthesis. Functionally, catalyzes the decarboxylation of 3-octaprenyl-4-hydroxy benzoate to 2-octaprenylphenol, an intermediate step in ubiquinone biosynthesis. This chain is 3-octaprenyl-4-hydroxybenzoate carboxy-lyase, found in Albidiferax ferrireducens (strain ATCC BAA-621 / DSM 15236 / T118) (Rhodoferax ferrireducens).